Consider the following 194-residue polypeptide: Potassium-transporting ATPase KdpC subunit (194 aa).

The helical transmembrane segment at 12–34 (LFLLLLTGGVYPLLTTALGQWWF) threads the bilayer.

It belongs to the KdpC family. In terms of assembly, the system is composed of three essential subunits: KdpA, KdpB and KdpC.

It is found in the cell inner membrane. Its function is as follows. Part of the high-affinity ATP-driven potassium transport (or Kdp) system, which catalyzes the hydrolysis of ATP coupled with the electrogenic transport of potassium into the cytoplasm. This subunit acts as a catalytic chaperone that increases the ATP-binding affinity of the ATP-hydrolyzing subunit KdpB by the formation of a transient KdpB/KdpC/ATP ternary complex. This chain is Potassium-transporting ATPase KdpC subunit, found in Salmonella enteritidis PT4 (strain P125109).